The sequence spans 302 residues: Oxygen-dependent coproporphyrinogen-III oxidase (302 aa).

A substrate-binding site is contributed by Ser-90. A divalent metal cation-binding residues include His-94 and His-104. The active-site Proton donor is His-104. A substrate-binding site is contributed by 106–108; that stretch reads NVR. The a divalent metal cation site is built by His-143 and His-173. The important for dimerization stretch occupies residues 238 to 273; that stretch reads YVEFNLIYDRGTIFGLQSNGRTESILLSMPPIVKWR.

Belongs to the aerobic coproporphyrinogen-III oxidase family. Homodimer. A divalent metal cation is required as a cofactor.

Its subcellular location is the cytoplasm. The catalysed reaction is coproporphyrinogen III + O2 + 2 H(+) = protoporphyrinogen IX + 2 CO2 + 2 H2O. The protein operates within porphyrin-containing compound metabolism; protoporphyrin-IX biosynthesis; protoporphyrinogen-IX from coproporphyrinogen-III (O2 route): step 1/1. Functionally, involved in the heme biosynthesis. Catalyzes the aerobic oxidative decarboxylation of propionate groups of rings A and B of coproporphyrinogen-III to yield the vinyl groups in protoporphyrinogen-IX. This Methylobacillus flagellatus (strain ATCC 51484 / DSM 6875 / VKM B-1610 / KT) protein is Oxygen-dependent coproporphyrinogen-III oxidase.